Here is a 165-residue protein sequence, read N- to C-terminus: MTVVGLIWAQSTTGVIGRDGGMPWRVPEDLTRFKQLTMGHPVVMGRRTWDSLPVGVRPLPGRRNIVLSRQIDFMAEGAEVFGSLEETISNLETEPEMWVIGGEQIYRLALPLATRCGVTEVDTYLLHEDDDVLAPVLDDTWVGVTGEWLVSCSGLRYRLHSYHRS.

The DHFR domain maps to 3–165 (VVGLIWAQST…RYRLHSYHRS (163 aa)). Substrate is bound at residue 7-9 (IWA). Residues 8-9 (WA) and 16-21 (IGRDGG) each bind NADP(+). A substrate-binding site is contributed by Asp29. 45–48 (GRRT) lines the NADP(+) pocket. Arg62 contacts substrate. NADP(+)-binding positions include 67 to 70 (LSRQ) and 100 to 105 (IGGEQI). Thr119 provides a ligand contact to substrate.

The protein belongs to the dihydrofolate reductase family.

It catalyses the reaction (6S)-5,6,7,8-tetrahydrofolate + NADP(+) = 7,8-dihydrofolate + NADPH + H(+). It functions in the pathway cofactor biosynthesis; tetrahydrofolate biosynthesis; 5,6,7,8-tetrahydrofolate from 7,8-dihydrofolate: step 1/1. Key enzyme in folate metabolism. Catalyzes an essential reaction for de novo glycine and purine synthesis, and for DNA precursor synthesis. The polypeptide is Dihydrofolate reductase (folA) (Mycobacterium leprae (strain TN)).